Here is a 139-residue protein sequence, read N- to C-terminus: Cystatin-11 (139 aa).

A signal peptide spans Met1–Arg28. Disulfide bonds link Cys94-Cys102 and Cys115-Cys135. Asn134 carries N-linked (GlcNAc...) asparagine glycosylation.

This sequence belongs to the cystatin family.

Its subcellular location is the secreted. Has antibacterial activity against the Gram-negative bacteria E.coli. May play a role in sperm maturation and fertilization. This Rattus norvegicus (Rat) protein is Cystatin-11 (Cst11).